The following is a 144-amino-acid chain: Putative pre-16S rRNA nuclease (144 aa).

This sequence belongs to the YqgF nuclease family.

It is found in the cytoplasm. In terms of biological role, could be a nuclease involved in processing of the 5'-end of pre-16S rRNA. The sequence is that of Putative pre-16S rRNA nuclease from Symbiobacterium thermophilum (strain DSM 24528 / JCM 14929 / IAM 14863 / T).